Reading from the N-terminus, the 457-residue chain is Argininosuccinate lyase (457 aa).

It belongs to the lyase 1 family. Argininosuccinate lyase subfamily.

The protein resides in the cytoplasm. The catalysed reaction is 2-(N(omega)-L-arginino)succinate = fumarate + L-arginine. It participates in amino-acid biosynthesis; L-arginine biosynthesis; L-arginine from L-ornithine and carbamoyl phosphate: step 3/3. This chain is Argininosuccinate lyase, found in Serratia proteamaculans (strain 568).